The sequence spans 532 residues: Arginine--tRNA ligase (532 aa).

Residues 122-132 carry the 'HIGH' region motif; it reads ANPTGPLHVAS.

It belongs to the class-I aminoacyl-tRNA synthetase family. In terms of assembly, monomer.

The protein localises to the cytoplasm. The catalysed reaction is tRNA(Arg) + L-arginine + ATP = L-arginyl-tRNA(Arg) + AMP + diphosphate. This is Arginine--tRNA ligase from Elusimicrobium minutum (strain Pei191).